The chain runs to 538 residues: CWF19-like protein 1 (538 aa).

Disordered stretches follow at residues 259–278 and 298–324; these read PDVTENPYRKSGQEASTGKQ and QGRKRSSTGRDSKSSPHPKQPRKPPQP.

It belongs to the CWF19 family.

This chain is CWF19-like protein 1 (CWF19L1), found in Pongo abelii (Sumatran orangutan).